Here is a 474-residue protein sequence, read N- to C-terminus: Variant surface glycoprotein MITAT 1.5 (474 aa).

Residues 1 to 22 (MIHSNKVATVVLALISSWPADG) form the signal peptide. Disulfide bonds link C37/C161 and C144/C214. 2 N-linked (GlcNAc...) asparagine glycosylation sites follow: N74 and N95. N-linked (GlcNAc...) asparagine glycosylation is present at N329. The segment at 388-449 (AKDGEGQKNQ…ETDEPDKEKC (62 aa)) is disordered. Basic and acidic residues-rich tracts occupy residues 414 to 423 (TNKEACEKEN) and 435 to 449 (KGKD…KEKC). N451 carries GPI-anchor amidated asparagine lipidation. Positions 452–474 (GSFLTSKQFAFSVVSAAFMALLF) are cleaved as a propeptide — removed in mature form.

Its subcellular location is the cell membrane. Functionally, VSG forms a coat on the surface of the parasite. The trypanosome evades the immune response of the host by expressing a series of antigenically distinct VSGs from an estimated 1000 VSG genes. This is Variant surface glycoprotein MITAT 1.5 from Trypanosoma brucei brucei.